Here is a 324-residue protein sequence, read N- to C-terminus: Phospho-N-acetylmuramoyl-pentapeptide-transferase (324 aa).

Transmembrane regions (helical) follow at residues 5–25 (GLLV…PLFI), 52–72 (PTMG…IMAI), 77–97 (LGAE…IGFL), 117–137 (LLGQ…QGFD), 147–167 (ITFD…IGGS), 176–196 (LDGL…IIAV), 202–222 (AVAI…VFNA), 227–247 (VFMG…VAIL), 253–273 (LLVI…IQVI), and 302–322 (VVVT…YIGV).

Belongs to the glycosyltransferase 4 family. MraY subfamily. Mg(2+) is required as a cofactor.

Its subcellular location is the cell membrane. It carries out the reaction UDP-N-acetyl-alpha-D-muramoyl-L-alanyl-gamma-D-glutamyl-meso-2,6-diaminopimeloyl-D-alanyl-D-alanine + di-trans,octa-cis-undecaprenyl phosphate = di-trans,octa-cis-undecaprenyl diphospho-N-acetyl-alpha-D-muramoyl-L-alanyl-D-glutamyl-meso-2,6-diaminopimeloyl-D-alanyl-D-alanine + UMP. It participates in cell wall biogenesis; peptidoglycan biosynthesis. In terms of biological role, catalyzes the initial step of the lipid cycle reactions in the biosynthesis of the cell wall peptidoglycan: transfers peptidoglycan precursor phospho-MurNAc-pentapeptide from UDP-MurNAc-pentapeptide onto the lipid carrier undecaprenyl phosphate, yielding undecaprenyl-pyrophosphoryl-MurNAc-pentapeptide, known as lipid I. In Bacillus cytotoxicus (strain DSM 22905 / CIP 110041 / 391-98 / NVH 391-98), this protein is Phospho-N-acetylmuramoyl-pentapeptide-transferase.